A 163-amino-acid polypeptide reads, in one-letter code: Pheromone-binding protein (163 aa).

A signal peptide spans 1–21 (MLRKISLLLLPVFVAINLVHS). Intrachain disulfides connect Cys-40-Cys-75, Cys-71-Cys-129, and Cys-118-Cys-138.

Belongs to the PBP/GOBP family. As to quaternary structure, homodimer. In terms of tissue distribution, antenna.

Functionally, this major soluble protein in olfactory sensilla of male moths might serve to solubilize the extremely hydrophobic pheromone molecules and to transport pheromone through the aqueous lymph to receptors located on olfactory cilia. This chain is Pheromone-binding protein, found in Antheraea polyphemus (Polyphemus moth).